The chain runs to 570 residues: 4-coumarate--CoA ligase 4 (570 aa).

6 residues coordinate ATP: Ser-218, Ser-219, Gly-220, Thr-221, Thr-222, and Lys-226. Tyr-268 contacts (E)-4-coumaroyl-AMP. Arg-289 is a CoA binding site. Residues 291–360 (ELNLVMELIQ…LKFPNAIFGQ (70 aa)) form an SBD1 region. Ala-338, Gln-360, Gly-361, and Thr-365 together coordinate (E)-4-coumaroyl-AMP. Positions 360, 361, 365, 448, and 463 each coordinate ATP. Residues 361–427 (GYGMTESGTV…VRGHQLMKGY (67 aa)) are SBD2. Residues Lys-465 and Lys-469 each contribute to the (E)-4-coumaroyl-AMP site. Lys-471 and Gly-472 together coordinate CoA. Lys-554 is an ATP binding site.

Belongs to the ATP-dependent AMP-binding enzyme family. Mg(2+) serves as cofactor.

It carries out the reaction (E)-sinapate + ATP + CoA = (E)-sinapoyl-CoA + AMP + diphosphate. It catalyses the reaction (E)-4-coumarate + ATP + CoA = (E)-4-coumaroyl-CoA + AMP + diphosphate. The catalysed reaction is (E)-caffeate + ATP + CoA = (E)-caffeoyl-CoA + AMP + diphosphate. The enzyme catalyses (E)-ferulate + ATP + CoA = (E)-feruloyl-CoA + AMP + diphosphate. It carries out the reaction (E)-sinapate + ATP + H(+) = (E)-sinapoyl-AMP + diphosphate. It catalyses the reaction (E)-sinapoyl-AMP + CoA = (E)-sinapoyl-CoA + AMP + H(+). The catalysed reaction is (E)-4-coumarate + ATP + H(+) = (E)-4-coumaroyl-AMP + diphosphate. The enzyme catalyses (E)-4-coumaroyl-AMP + CoA = (E)-4-coumaroyl-CoA + AMP + H(+). It carries out the reaction (E)-caffeate + ATP + H(+) = (E)-caffeoyl-AMP + diphosphate. It catalyses the reaction (E)-caffeoyl-AMP + CoA = (E)-caffeoyl-CoA + AMP + H(+). The catalysed reaction is (E)-ferulate + ATP + H(+) = (E)-feruloyl-AMP + diphosphate. The enzyme catalyses (E)-feruloyl-AMP + CoA = (E)-feruloyl-CoA + AMP + H(+). The protein operates within phytoalexin biosynthesis; 3,4',5-trihydroxystilbene biosynthesis; 3,4',5-trihydroxystilbene from trans-4-coumarate: step 1/2. Functionally, produces CoA thioesters of a variety of hydroxy- and methoxy-substituted cinnamic acids, which are used to synthesize several phenylpropanoid-derived compounds, including anthocyanins, flavonoids, isoflavonoids, coumarins, lignin, suberin and wall-bound phenolics. Follows a two-step reaction mechanism, wherein the carboxylate substrate first undergoes adenylation by ATP, followed by a thioesterification in the presence of CoA to yield the final CoA thioesters. The protein is 4-coumarate--CoA ligase 4 of Arabidopsis thaliana (Mouse-ear cress).